Consider the following 99-residue polypeptide: Large ribosomal subunit protein bL21 (99 aa).

The protein belongs to the bacterial ribosomal protein bL21 family. In terms of assembly, part of the 50S ribosomal subunit. Contacts protein L20.

Its function is as follows. This protein binds to 23S rRNA in the presence of protein L20. This chain is Large ribosomal subunit protein bL21, found in Mycoplasmopsis agalactiae (strain NCTC 10123 / CIP 59.7 / PG2) (Mycoplasma agalactiae).